The primary structure comprises 141 residues: Protein X (141 aa).

Residues 22-52 (GPQSSGPPFPRPAAGSAASSASSPSPSDESD) are disordered. The span at 33–48 (PAAGSAASSASSPSPS) shows a compositional bias: low complexity. A mitochondrial targeting sequence region spans residues 68–113 (PCCLVFTCADLRTMDSTVNFVSWHAKRQLGMPSKDLWTPYIKDQLL).

This sequence belongs to the orthohepadnavirus protein X family. In terms of assembly, may form homodimer. May interact with host CEBPA, CFLAR, CREB1, DDB1, E4F1, HBXIP, HSPD1/HSP60, NFKBIA, POLR2E and SMAD4. Interacts with host SMC5-SMC6 complex and induces its degradation. Interacts with host TRPC4AP; leading to prevent ubiquitination of TRPC4AP. Interacts with host PLSCR1; this interaction promotes ubiquitination and degradation of HBx and impairs HBx-mediated cell proliferation. Post-translationally, a fraction may be phosphorylated in insect cells and HepG2 cells, a human hepatoblastoma cell line. Phosphorylated in vitro by host protein kinase C or mitogen-activated protein kinase. N-acetylated in insect cells.

Its subcellular location is the host cytoplasm. It is found in the host nucleus. The protein resides in the host mitochondrion. Functionally, multifunctional protein that plays a role in silencing host antiviral defenses and promoting viral transcription. Does not seem to be essential for HBV infection. May be directly involved in development of cirrhosis and liver cancer (hepatocellular carcinoma). Most of cytosolic activities involve modulation of cytosolic calcium. The effect on apoptosis is controversial depending on the cell types in which the studies have been conducted. May induce apoptosis by localizing in mitochondria and causing loss of mitochondrial membrane potential. May also modulate apoptosis by binding host CFLAR, a key regulator of the death-inducing signaling complex (DISC). Promotes viral transcription by using the host E3 ubiquitin ligase DDB1 to target the SMC5-SMC6 complex to proteasomal degradation. This host complex would otherwise bind to viral episomal DNA, and prevents its transcription. Moderately stimulates transcription of many different viral and cellular transcription elements. Promoters and enhancers stimulated by HBx contain DNA binding sites for NF-kappa-B, AP-1, AP-2, c-EBP, ATF/CREB, or the calcium-activated factor NF-AT. The protein is Protein X of Woodchuck hepatitis B virus (isolate w64/pWS23) (WHV).